The following is a 156-amino-acid chain: Small ribosomal subunit protein uS7 (156 aa).

This sequence belongs to the universal ribosomal protein uS7 family. Part of the 30S ribosomal subunit. Contacts proteins S9 and S11.

One of the primary rRNA binding proteins, it binds directly to 16S rRNA where it nucleates assembly of the head domain of the 30S subunit. Is located at the subunit interface close to the decoding center, probably blocks exit of the E-site tRNA. This is Small ribosomal subunit protein uS7 from Nitrobacter winogradskyi (strain ATCC 25391 / DSM 10237 / CIP 104748 / NCIMB 11846 / Nb-255).